The chain runs to 411 residues: Endo-1,4-beta-xylanase A (411 aa).

Positions 1–33 are cleaved as a signal peptide; the sequence is MKKFKIRKLMARVLALALVFSTFFMVSKVDANA. Positions 34–382 constitute a GH10 domain; that stretch reads ASYNLMETYG…KPAYDEVVKA (349 aa). The active-site Proton donor is the glutamate 201. Glutamate 311 (nucleophile) is an active-site residue. Positions 387–411 are disordered; that stretch reads FGNPGSFTPQPTITPQPTPTPSGQT. The segment covering 398 to 411 has biased composition (pro residues); the sequence is TITPQPTPTPSGQT.

Belongs to the glycosyl hydrolase 10 (cellulase F) family.

The catalysed reaction is Endohydrolysis of (1-&gt;4)-beta-D-xylosidic linkages in xylans.. Its pathway is glycan degradation; xylan degradation. Its function is as follows. B.fibrisolvens is located in the rumen of ruminant animals, where it contributes to the animal's digestion of plant material by hydrolyzing hemicellulose with its xylanases. In Butyrivibrio fibrisolvens, this protein is Endo-1,4-beta-xylanase A (xynA).